A 286-amino-acid chain; its full sequence is MMDIFLAILPAIFWGSIVLFNVKLGGGPYSQTLGTTFGALIFSIVVYIFMKPVLTPTVIGVGVVSGLFWALGQANQLKSIDLMGVSRTMPISTGLQLVATTLFGVIVFHEWSTTISVVLGILALVCIIIGVILTSLQSEEEKNAEQAANFKRGIVILLISTVGYLVYVVVIRLFNVDGWSALLPQAVGMVLGGILLTFKHHPFNKYAIRNIIPGLIWAAGNMFLFISQPRVGVATSFSLSQMGIIISTLGGILILGEKKTKRQLTGIVVGIVFIIAAGIMLGIAKS.

A run of 10 helical transmembrane segments spans residues 4 to 22 (IFLA…LFNV), 27 to 49 (GPYS…VYIF), 53 to 72 (VLTP…WALG), 85 to 107 (VSRT…GVIV), 111 to 133 (WSTT…GVIL), 154 to 176 (IVIL…LFNV), 181 to 198 (ALLP…LLTF), 211 to 228 (IIPG…FISQ), 233 to 255 (VATS…ILIL), and 267 to 284 (IVVG…LGIA).

It belongs to the GRP transporter (TC 2.A.7.5) family.

Its subcellular location is the cell membrane. Its function is as follows. Involved in the uptake of glucose. This chain is Probable glucose uptake protein GlcU (glcU), found in Bacillus cereus (strain ATCC 14579 / DSM 31 / CCUG 7414 / JCM 2152 / NBRC 15305 / NCIMB 9373 / NCTC 2599 / NRRL B-3711).